We begin with the raw amino-acid sequence, 294 residues long: 4-hydroxy-tetrahydrodipicolinate synthase (294 aa).

Residue T48 participates in pyruvate binding. Y136 serves as the catalytic Proton donor/acceptor. The active-site Schiff-base intermediate with substrate is the K164. I206 contacts pyruvate.

Belongs to the DapA family. Homotetramer; dimer of dimers.

Its subcellular location is the cytoplasm. The enzyme catalyses L-aspartate 4-semialdehyde + pyruvate = (2S,4S)-4-hydroxy-2,3,4,5-tetrahydrodipicolinate + H2O + H(+). It participates in amino-acid biosynthesis; L-lysine biosynthesis via DAP pathway; (S)-tetrahydrodipicolinate from L-aspartate: step 3/4. Its function is as follows. Catalyzes the condensation of (S)-aspartate-beta-semialdehyde [(S)-ASA] and pyruvate to 4-hydroxy-tetrahydrodipicolinate (HTPA). The sequence is that of 4-hydroxy-tetrahydrodipicolinate synthase from Phenylobacterium zucineum (strain HLK1).